Consider the following 481-residue polypeptide: MKNGVKQLFLLSLIGLSLTNVAWAEVARPKNDTLTNTIQSAELKTSSFSSMPKKEIPNRHIISLSKSQLAHHPRLVLRGLIPALYQNNTQAVQLLLPLYKQFPQQDNFLLTWAKAIEAREQGDLTQSIAYYRELFARDASLLPLRYQLAQALFFNYENEAAKIQFEKLRTEVDDEKFLGVIDQYLLTLNQRNQWIWQVGLNFLNDDNLNNAPKSGTKIGSWTAWEKESGQGVGYSLSVEKKWPWADHFFSKTMFNGNGKYYWDNKKYNEATVRIGGGLGYQTASVEVSLFPFQEKRWYAGGSSGTNTMKQYADKLGIRLENVDWLSKTWQISTALEYGESRYKIRKHLDGNYYFVSSTLFYLPKSTQFWFVGMDFHRENTQALDNAYQQKTLRLGWGQDWFYGISSRLTFSYANRVYREKDLIGIQQKNREYTTTITLWHRNIHFMGLTPKLSWDYQKSTSNHAFYRYDKNRIYLEIGKIF.

The first 24 residues, Met-1–Ala-24, serve as a signal peptide directing secretion. The N-terminal domain stretch occupies residues Ala-24–Asn-192. A C-terminal probable beta barrel region spans residues Gln-193–Phe-481. A run of 14 beta stranded transmembrane segments spans residues Trp-194–Asn-204, Ala-223–Pro-243, Phe-248–Asn-257, Thr-271–Gln-281, Val-285–Lys-295, Leu-315–Leu-325, Trp-329–Glu-339, Tyr-353–Pro-363, Phe-368–Arg-377, Lys-390–Asp-399, Ile-404–Asn-414, Tyr-432–Arg-441, Leu-448–Lys-458, and Asn-471–Phe-481.

The protein belongs to the Slam family.

Its subcellular location is the cell outer membrane. Its function is as follows. Required for correct export to the cell surface of some cell outer membrane lipoproteins. This chain is Surface lipoprotein assembly modifier 2, found in Haemophilus influenzae (strain ATCC 51907 / DSM 11121 / KW20 / Rd).